The sequence spans 174 residues: Chorismate pyruvate-lyase (174 aa).

4 residues coordinate substrate: methionine 36, arginine 78, leucine 116, and glutamate 157.

This sequence belongs to the UbiC family. Monomer.

The protein localises to the cytoplasm. The catalysed reaction is chorismate = 4-hydroxybenzoate + pyruvate. The protein operates within cofactor biosynthesis; ubiquinone biosynthesis. In terms of biological role, removes the pyruvyl group from chorismate, with concomitant aromatization of the ring, to provide 4-hydroxybenzoate (4HB) for the ubiquinone pathway. The sequence is that of Chorismate pyruvate-lyase from Erwinia tasmaniensis (strain DSM 17950 / CFBP 7177 / CIP 109463 / NCPPB 4357 / Et1/99).